The sequence spans 88 residues: Small ribosomal subunit protein bS16c (88 aa).

It belongs to the bacterial ribosomal protein bS16 family.

The protein localises to the plastid. Its subcellular location is the chloroplast. The polypeptide is Small ribosomal subunit protein bS16c (Helianthus annuus (Common sunflower)).